Consider the following 314-residue polypeptide: Probable cell division protein WhiA (314 aa).

The H-T-H motif DNA-binding region spans 274 to 308; sequence SLKELGEMVSTGTISKSGVNHRLRKLNELADKIRS.

This sequence belongs to the WhiA family.

In terms of biological role, involved in cell division and chromosome segregation. In Staphylococcus carnosus (strain TM300), this protein is Probable cell division protein WhiA.